The sequence spans 525 residues: Phosphoenolpyruvate carboxykinase (ATP) 1 (525 aa).

The substrate site is built by R55, Y190, and K196. ATP contacts are provided by residues K196, H215, and G231 to T239. 2 residues coordinate Mn(2+): K196 and H215. D252 is a Mn(2+) binding site. Residues E280, R317, and T442 each contribute to the ATP site. Residue R317 coordinates substrate.

It belongs to the phosphoenolpyruvate carboxykinase (ATP) family. It depends on Mn(2+) as a cofactor.

It localises to the cytoplasm. The catalysed reaction is oxaloacetate + ATP = phosphoenolpyruvate + ADP + CO2. It functions in the pathway carbohydrate biosynthesis; gluconeogenesis. Involved in the gluconeogenesis. Catalyzes the conversion of oxaloacetate (OAA) to phosphoenolpyruvate (PEP) through direct phosphoryl transfer between the nucleoside triphosphate and OAA. The polypeptide is Phosphoenolpyruvate carboxykinase (ATP) 1 (Moorella thermoacetica (strain ATCC 39073 / JCM 9320)).